The sequence spans 398 residues: MALQAASFLPSSFSINKEGKANVSLKETSLFGVTFSDSLRTDFSSLRTRRGCRQISQTGAIRSQAVATTPSVNRATGEGKKTLRKGSVIITGASSGLGLATAKALAETGKWHVIMACRDFLKAERAAKSAGMPKENYTIMHLDLASLDSVRQFVETFRRSERPLDVLVCNAAVYFPTAKEPTYTADGFELSVGTNHLGHFLLSRLLLDDLNKSDYPSKRLIIVGSITGNTNTLAGNVPPKANLGDLRGLAGGLNGMNSSAMIDGAEFDGAKAYKDSKVCNMLTMQEFHRRYHEETGITFASLYPGCIATTGLFREHIPLFRTLFPPFQKYITKGYVSEAESGKRLAQVVSEPSLTKSGVYWSWNKDSASFENQLSEEASDVEKARKVWEVSEKLVGLA.

The protein belongs to the short-chain dehydrogenases/reductases (SDR) family. POR subfamily.

It localises to the plastid. Its subcellular location is the chloroplast. The enzyme catalyses chlorophyllide a + NADP(+) = protochlorophyllide a + NADPH + H(+). It participates in porphyrin-containing compound metabolism; chlorophyll biosynthesis. Functionally, phototransformation of protochlorophyllide (Pchlide) to chlorophyllide (Chlide). The polypeptide is Protochlorophyllide reductase, chloroplastic (POR1) (Daucus carota (Wild carrot)).